Reading from the N-terminus, the 545-residue chain is Arginine-containing cyclodipeptide synthase ateA (545 aa).

Over residues Gly390–Met425 the composition is skewed to polar residues. A disordered region spans residues Gly390–Val433. The Conserved DDXXE motif signature appears at Asp434 to Glu438.

This sequence belongs to the arginine-containing cyclodipeptide synthase family.

The catalysed reaction is L-glutamyl-tRNA(Glu) + L-arginyl-tRNA(Arg) = cyclo(L-arginyl-L-glutamyl) + tRNA(Glu) + tRNA(Arg) + 2 H(+). It participates in secondary metabolite biosynthesis. Arginine-containing cyclodipeptide synthase; part of the cluster that mediates the biosynthesis of a highly modified cyclo-arginine-glutamate dipeptide (cRE). Within the pathway, ateA acts as the scaffold-generating enzyme and is responsible for formation of the cyclo-Arg-Glu diketopiperazine (cRW) from L-arginyl-tRNA(Arg) + L-glutamyl-tRNA(Glu). Additional enzymes from the cluster then further modify the cyclo-Arg-Glu diketopiperazine (cRW) scaffold. The protein is Arginine-containing cyclodipeptide synthase ateA of Aspergillus terreus.